Reading from the N-terminus, the 1164-residue chain is Toxin subunit YenA1 (1164 aa).

Positions Arg-106–Asn-131 are disordered. Positions Thr-118–Thr-130 are enriched in low complexity.

In terms of assembly, semipurified toxin complex consists of at least YenA1, YenA2, YenB, YenC1, YenC2, Chi1 and Chi2. The Yen-TC:K9 subcomplex is about 26 nm tall and 22 nm in diameter with 5-fold symmetry and 5 copies of YenA1, YenA2, Chi1 and Chi2; the chitinase subunits may be solvent accessible on the exterior the complex. The Yen-TC:K9 subcomplex has no insecticidal activity. The native complex with additional YenB, YenC1 and YenC2 subunits is 16 nm taller and is insecticidal; the toxicity-conferring subunits are present at about 1 copy each.

The protein resides in the secreted. With respect to regulation, toxin complex is secreted when grown at 25 degrees Celsius or less; at higher temperatures the proteins are present intracellularly but not secreted. Functionally, part of an orally active toxin complex (TC) with strong insecticidal effects on larvae of the Coleoptera Costelytra zealandica, Acrossidius tasmania and Adoryphorus couloni and some Lepidoptera larvae. The TC has an endochitinase activity. This is Toxin subunit YenA1 from Yersinia entomophaga.